Consider the following 600-residue polypeptide: DNA polymerase alpha subunit B (600 aa).

Residues 112-167 form a disordered region; it reads AYTTPSKGPHKRVSSTPETPLTKRSISTRSPHQLLSPSSFSPSATPSQKYSSRTNR. Over residues 125-140 the composition is skewed to polar residues; the sequence is SSTPETPLTKRSISTR. Position 126 is a phosphoserine (Ser-126). Phosphothreonine occurs at positions 127 and 130. Ser-141, Ser-147, Ser-152, and Ser-154 each carry phosphoserine. The span at 141-158 shows a compositional bias: low complexity; that stretch reads SPHQLLSPSSFSPSATPS.

It belongs to the DNA polymerase alpha subunit B family. As to quaternary structure, component of the alpha DNA polymerase complex (also known as the alpha DNA polymerase-primase complex) consisting of four subunits: the catalytic subunit POLA1, the regulatory subunit POLA2, and the primase complex subunits PRIM1 and PRIM2 respectively. Within the complex, POLA1 directly interacts with PRIM2. Phosphorylated in a cell cycle-dependent manner, in G2/M phase.

The protein resides in the nucleus. In terms of biological role, accessory subunit of the DNA polymerase alpha complex (also known as the alpha DNA polymerase-primase complex) which plays an essential role in the initiation of DNA synthesis. During the S phase of the cell cycle, the DNA polymerase alpha complex (composed of a catalytic subunit POLA1, an accessory subunit POLA2 and two primase subunits, the catalytic subunit PRIM1 and the regulatory subunit PRIM2) is recruited to DNA at the replicative forks via direct interactions with MCM10 and WDHD1. The primase subunit of the polymerase alpha complex initiates DNA synthesis by oligomerising short RNA primers on both leading and lagging strands. These primers are initially extended by the polymerase alpha catalytic subunit and subsequently transferred to polymerase delta and polymerase epsilon for processive synthesis on the lagging and leading strand, respectively. This is DNA polymerase alpha subunit B (Pola2) from Rattus norvegicus (Rat).